We begin with the raw amino-acid sequence, 61 residues long: Metallothionein-I, hippocampal (61 aa).

The residue at position 1 (methionine 1) is an N-acetylmethionine. The interval 1–29 is beta; sequence MDPNCSCATGDSCACASTCKCKECKCTSC. Positions 5, 7, 13, 15, 19, 21, 24, 26, 29, 33, 34, 36, 37, 41, 44, 48, 50, and 57 each coordinate a divalent metal cation. The alpha stretch occupies residues 30-61; sequence KKSCCSCCPVGCAKCAQGCICKGASDKCSCCA. Residue serine 58 is modified to Phosphoserine. A divalent metal cation is bound by residues cysteine 59 and cysteine 60.

This sequence belongs to the metallothionein superfamily. Type 1 family.

Its function is as follows. Metallothioneins have a high content of cysteine residues that bind various heavy metals; these proteins are transcriptionally regulated by both heavy metals and glucocorticoids. This isoform may play a role in regulating the transport, accumulation, and compartmentation of zinc in the hippocampus. The polypeptide is Metallothionein-I, hippocampal (Bos taurus (Bovine)).